A 332-amino-acid chain; its full sequence is NADH-quinone oxidoreductase subunit H (332 aa).

The next 9 membrane-spanning stretches (helical) occupy residues 8-28, 44-66, 78-98, 120-140, 157-177, 196-216, 245-265, 274-294, and 312-332; these read IIECILKIIVVLLIFSALAGF, IGPNYVGPYGLLQVVADGIKLFA, PIFILAPSIAAITAFIAMAPI, VGILFVLAVSSCGIYAPLLAG, IQFLSFEVITILSLLAPLMII, WLIFKQPLAFGLFIIAAYVEL, MFFIGEYANMFATAFILSLVF, FIPGGIAILLKVCFFIFLFMW, and WKIMLPLALLNVLITGCILLF.

It belongs to the complex I subunit 1 family. As to quaternary structure, NDH-1 is composed of 14 different subunits. Subunits NuoA, H, J, K, L, M, N constitute the membrane sector of the complex.

The protein localises to the cell inner membrane. It catalyses the reaction a quinone + NADH + 5 H(+)(in) = a quinol + NAD(+) + 4 H(+)(out). NDH-1 shuttles electrons from NADH, via FMN and iron-sulfur (Fe-S) centers, to quinones in the respiratory chain. The immediate electron acceptor for the enzyme in this species is believed to be ubiquinone. Couples the redox reaction to proton translocation (for every two electrons transferred, four hydrogen ions are translocated across the cytoplasmic membrane), and thus conserves the redox energy in a proton gradient. This subunit may bind ubiquinone. The polypeptide is NADH-quinone oxidoreductase subunit H (Helicobacter hepaticus (strain ATCC 51449 / 3B1)).